Reading from the N-terminus, the 112-residue chain is Omega-agatoxin-1A (112 aa).

An N-terminal signal peptide occupies residues 1 to 19 (MMKFVVFLACLFVAAHSFA). Residues 20 to 36 (VEGEEEYFEAEVPELER) constitute a propeptide that is removed on maturation. Positions 103–109 (RSEESER) are cleaved as a propeptide — glu-rich.

It belongs to the neurotoxin 04 (omega-agtx) family. 01 (type I omega-agtx) subfamily. In terms of assembly, heterodimer of two subunits, a major chain and a minor chain, linked by a disulfide bond. Proteolytically processed to yield the major and the minor chains. Expressed by the venom gland.

The protein resides in the secreted. Omega-agatoxins are antagonists of voltage-gated calcium channels. They block insect neuromuscular transmission presynaptically. This toxin is a blocker of L-type calcium channels (Cav/CACNA1). This Agelenopsis aperta (North American funnel-web spider) protein is Omega-agatoxin-1A.